Here is a 404-residue protein sequence, read N- to C-terminus: MDKVKKAVLAFSGGLDTSVILKWLQDTYQCEVVTFTADIGQGEEIEPARAKAVQFGIREIFIEDLREEFVRDYVFPMFRANTIYEGEYLLGTSIARPLIAKRQVEIAQQTGADAVSHGATGKGNDQVRFELGYYALQPDIRVIAPWREWDLTSREKLLTYAEKQGIPIEMKQKAGSPYSMDANLLHISYEGRALEDPAAEPEESMWRWTVSPETAPSEPEYLDLEYERGDIVALNGERLSPAAILTRLNQLGGKHGIGRLDLVENRYVGMKSRGCYETPGGTIMLRAHRAIESITLDREVAHLKDDLMPRYAALIYNGYWWSPERKLLQVLIDESQVNVNGRVRVKLYKGNVMVVGRDSRTDSLFDPDIATFEEDGGAYHQADAAGFIKLNALRMRIAKALRRC.

ATP is bound by residues 10-18 (AFSGGLDTS) and alanine 37. L-citrulline contacts are provided by tyrosine 88 and serine 93. Glycine 118 is an ATP binding site. Threonine 120, asparagine 124, and aspartate 125 together coordinate L-aspartate. Asparagine 124 lines the L-citrulline pocket. 5 residues coordinate L-citrulline: arginine 128, serine 179, serine 188, glutamate 264, and tyrosine 276.

This sequence belongs to the argininosuccinate synthase family. Type 1 subfamily. In terms of assembly, homotetramer.

The protein resides in the cytoplasm. It catalyses the reaction L-citrulline + L-aspartate + ATP = 2-(N(omega)-L-arginino)succinate + AMP + diphosphate + H(+). The protein operates within amino-acid biosynthesis; L-arginine biosynthesis; L-arginine from L-ornithine and carbamoyl phosphate: step 2/3. The polypeptide is Argininosuccinate synthase (Nitrosomonas europaea (strain ATCC 19718 / CIP 103999 / KCTC 2705 / NBRC 14298)).